The chain runs to 172 residues: Orotate phosphoribosyltransferase (172 aa).

5-phospho-alpha-D-ribose 1-diphosphate contacts are provided by residues arginine 88, lysine 89, lysine 92, histidine 94, and 113–121 (EDVTTSGGS). Orotate-binding residues include threonine 117 and arginine 145.

Belongs to the purine/pyrimidine phosphoribosyltransferase family. PyrE subfamily. As to quaternary structure, homodimer. Mg(2+) is required as a cofactor.

The catalysed reaction is orotidine 5'-phosphate + diphosphate = orotate + 5-phospho-alpha-D-ribose 1-diphosphate. It functions in the pathway pyrimidine metabolism; UMP biosynthesis via de novo pathway; UMP from orotate: step 1/2. Its function is as follows. Catalyzes the transfer of a ribosyl phosphate group from 5-phosphoribose 1-diphosphate to orotate, leading to the formation of orotidine monophosphate (OMP). The sequence is that of Orotate phosphoribosyltransferase from Methanospirillum hungatei JF-1 (strain ATCC 27890 / DSM 864 / NBRC 100397 / JF-1).